A 475-amino-acid polypeptide reads, in one-letter code: Tubulin epsilon chain (475 aa).

148 to 154 (GGGTGSG) contributes to the GTP binding site.

This sequence belongs to the tubulin family. As to quaternary structure, found in a complex with TEDC1, TEDC2, TUBE1 and TUBD1.

It is found in the cytoplasm. The protein resides in the cytoskeleton. It localises to the microtubule organizing center. The protein localises to the centrosome. In Mus musculus (Mouse), this protein is Tubulin epsilon chain (Tube1).